A 213-amino-acid polypeptide reads, in one-letter code: Large ribosomal subunit protein uL3 (213 aa).

Residues threonine 135–arginine 155 are disordered.

This sequence belongs to the universal ribosomal protein uL3 family. In terms of assembly, part of the 50S ribosomal subunit. Forms a cluster with proteins L14 and L19.

In terms of biological role, one of the primary rRNA binding proteins, it binds directly near the 3'-end of the 23S rRNA, where it nucleates assembly of the 50S subunit. The sequence is that of Large ribosomal subunit protein uL3 from Synechocystis sp. (strain ATCC 27184 / PCC 6803 / Kazusa).